A 500-amino-acid polypeptide reads, in one-letter code: Putative glucokinase-2 (500 aa).

At Ser-2 the chain carries N-acetylserine. Ser-2 bears the Phosphoserine mark. Residues 12-498 (EALEDAVVEI…SGVGAALCAL (487 aa)) form the Hexokinase domain. A hexokinase small subdomain region spans residues 74–217 (NGTERGVLLA…LSMINVVALT (144 aa)). ATP is bound at residue Lys-110. Positions 159–185 (KMGFTFSYPVDQTSLSSGTLIRWTKSF) are glucose-binding. Residues 218-487 (NDTVGTFLSH…RKIHLRLAKD (270 aa)) are hexokinase large subdomain. Residue Ser-470 is modified to Phosphoserine. Residue 487 to 492 (DGSGVG) participates in ATP binding.

Belongs to the hexokinase family.

It localises to the cytoplasm. It catalyses the reaction D-glucose + ATP = D-glucose 6-phosphate + ADP + H(+). The protein operates within carbohydrate degradation; glycolysis; D-glyceraldehyde 3-phosphate and glycerone phosphate from D-glucose: step 1/4. In terms of biological role, putative glucokinase involved in phosphorylation of aldohexoses and glucose uptake. Involved in sporulation. Required for the full activation of the early meiotic inducer IME1. The chain is Putative glucokinase-2 (EMI2) from Saccharomyces cerevisiae (strain ATCC 204508 / S288c) (Baker's yeast).